We begin with the raw amino-acid sequence, 51 residues long: MKYGVRYPISGVHECPFGYKQAQMIQFLATRYGVYEAELVTSHDGLQWEAI.

The chain is Gene 62 protein (62) from Mycobacterium (Mycobacteriophage L5).